The chain runs to 199 residues: Inducible T-cell costimulator (199 aa).

The first 20 residues, 1–20, serve as a signal peptide directing secretion; that stretch reads MKSGLWYFFLFCLRIKVLTG. The Extracellular portion of the chain corresponds to 21–140; that stretch reads EINGSANYEM…YESQLCCQLK (120 aa). Residues 30 to 132 enclose the Ig-like V-type domain; sequence MFIFHNGGVQ…LTGGYLHIYE (103 aa). 2 cysteine pairs are disulfide-bonded: Cys42/Cys109 and Cys63/Cys83. 2 N-linked (GlcNAc...) asparagine glycosylation sites follow: Asn89 and Asn110. A helical transmembrane segment spans residues 141–161; the sequence is FWLPIGCAAFVVVCILGCILI. The Cytoplasmic portion of the chain corresponds to 162–199; it reads CWLTKKKYSSSVHDPNGEYMFMRAVNTAKKSRLTDVTL.

In terms of assembly, homodimer; disulfide-linked. Interacts with ICOSLG. Interacts with PIK3R1. Interacts with TBK1; this interaction is critical for the maturation of T follicular regulatory cells. In terms of processing, N-glycosylated. In terms of tissue distribution, activated T-cells. Highly expressed on tonsillar T-cells, which are closely associated with B-cells in the apical light zone of germinal centers, the site of terminal B-cell maturation. Expressed at lower levels in thymus, lung, lymph node and peripheral blood leukocytes. Expressed in the medulla of fetal and newborn thymus.

It is found in the cell membrane. It localises to the secreted. Stimulatory receptor expressed in activated or antigen-experienced T-cells that plays an important role in the immune response. Upon binding to its ligand ICOSL expressed on antigen presenting cells (APCs), delivers costimulatory signals that enhances all basic T-cell responses to a foreign antigen, namely proliferation, secretion of lymphokines including IL10, up-regulation of molecules that mediate cell-cell interaction, and effective help for antibody secretion by B-cells. Also acts as a costimulatory receptor critical for the differentiation of T follicular regulatory cells upon immune challenges such as viral infection. Mechanistically, potentiates TCR-induced calcium flux by augmenting PLCG1 activation and actin remodeling. In addition, activates PI3K signaling pathways independently of calcium flux. Essential both for efficient interaction between T and B-cells and for normal antibody responses to T-cell dependent antigens. Prevents the apoptosis of pre-activated T-cells. Plays a critical role in CD40-mediated class switching of immunoglobin isotypes. In Homo sapiens (Human), this protein is Inducible T-cell costimulator (ICOS).